A 467-amino-acid chain; its full sequence is Chromosomal replication initiator protein DnaA (467 aa).

The interval 1-90 (MSLSLWQQCL…KPVTQTPQAA (90 aa)) is domain I, interacts with DnaA modulators. The segment at 91–130 (VTSNVAAPAQVAQTQPQRAAPSTRSGWDNVPAPAEPTYRS) is domain II. Residues 98-111 (PAQVAQTQPQRAAP) are compositionally biased toward low complexity. The disordered stretch occupies residues 98-119 (PAQVAQTQPQRAAPSTRSGWDN). Residues 131-347 (NVNVKHTFDN…GALNRVIANA (217 aa)) are domain III, AAA+ region. ATP is bound by residues glycine 175, glycine 177, lysine 178, and threonine 179. The tract at residues 348–467 (NFTGRAITID…FSNLIRTLSS (120 aa)) is domain IV, binds dsDNA.

It belongs to the DnaA family. Oligomerizes as a right-handed, spiral filament on DNA at oriC.

The protein localises to the cytoplasm. Functionally, plays an essential role in the initiation and regulation of chromosomal replication. ATP-DnaA binds to the origin of replication (oriC) to initiate formation of the DNA replication initiation complex once per cell cycle. Binds the DnaA box (a 9 base pair repeat at the origin) and separates the double-stranded (ds)DNA. Forms a right-handed helical filament on oriC DNA; dsDNA binds to the exterior of the filament while single-stranded (ss)DNA is stabiized in the filament's interior. The ATP-DnaA-oriC complex binds and stabilizes one strand of the AT-rich DNA unwinding element (DUE), permitting loading of DNA polymerase. After initiation quickly degrades to an ADP-DnaA complex that is not apt for DNA replication. Binds acidic phospholipids. This chain is Chromosomal replication initiator protein DnaA, found in Shigella sonnei (strain Ss046).